The sequence spans 208 residues: Ubiquitin-conjugating enzyme E2 S (208 aa).

The UBC core domain maps to 14-160 (QTIRQVMKEL…ARMMTEIHAQ (147 aa)). C98 acts as the Glycyl thioester intermediate in catalysis. Residues 161–193 (PAKCGAGASDAKDDDGPSTKKHAGLDKKLQDKK) form a disordered region. Over residues 170–193 (DAKDDDGPSTKKHAGLDKKLQDKK) the composition is skewed to basic and acidic residues.

Belongs to the ubiquitin-conjugating enzyme family.

The catalysed reaction is S-ubiquitinyl-[E1 ubiquitin-activating enzyme]-L-cysteine + [E2 ubiquitin-conjugating enzyme]-L-cysteine = [E1 ubiquitin-activating enzyme]-L-cysteine + S-ubiquitinyl-[E2 ubiquitin-conjugating enzyme]-L-cysteine.. It participates in protein modification; protein ubiquitination. Catalyzes the covalent attachment of ubiquitin to other proteins. Acts as an essential factor of the anaphase promoting complex/cyclosome (APC/C), a cell cycle-regulated ubiquitin ligase that controls progression through mitosis. Acts by specifically elongating polyubiquitin chains initiated by the E2 enzyme vih/UbcH10 on APC/C substrates, enhancing the degradation of APC/C substrates by the proteasome and promoting mitotic exit. This is Ubiquitin-conjugating enzyme E2 S from Drosophila virilis (Fruit fly).